The following is a 215-amino-acid chain: Protein C' (215 aa).

A disordered region spans residues 12–34; that stretch reads MPSFLKKILKLRGRRQEDESRSR. Residues 15 to 22 form an involved in self-degradation and in host STAT1 degradation region; sequence FLKKILKL.

The protein belongs to the respirovirus protein C family. As to quaternary structure, the different isoforms interact (via C-terminus) with unphosphorylated and phosphorylated human STAT1 (via N-terminus), favoring the formation of parallel STAT1 homodimers. The different isoforms do not interact with host STAT2. C protein interacts with L protein; this interaction has an inhibitory effect on viral transcription and replication. Y1 and Y2 proteins are produced not only by alternative initiation, but also by proteolytic cleavage of C'. Only alternative initiation is detected in vitro, whereas in vivo cleavage seems to be predominant.

It localises to the host cytoplasm. The different products prevent the establishment of cellular antiviral state by blocking the interferon-alpha/beta (IFN-alpha/beta) and IFN-gamma signaling pathways. They inhibit IFN-alpha/beta induced tyrosine phosphorylation of STAT1 and STAT2. Blocking the IFN-alpha/beta pathway requires binding to STAT1 in the cytoplasm. They inhibit IFN-gamma induced serine phosphorylation of STAT1. Block the IFN-gamma pathway by binding to and stabilizing the parallel form of the STAT1 dimer, further inducing high-molecular-weight complex formation and inhibition of transcription by IFN-gamma. May also have a role in preventing the cell to enter apoptosis. Modulate regulation of viral transcription and replication. Overexpression inhibits the viral RNA polymerase. The absence of all C', C, Y1 and Y2 proteins leads to viral delayed growth. Plays an important role in virion particles release. Modulates virion shape. This Sendai virus (strain Nagoya) (SeV) protein is Protein C' (P/V/C).